The primary structure comprises 203 residues: Secreted RxLR effector protein RXLR-C28 (203 aa).

Positions 1 to 24 are cleaved as a signal peptide; the sequence is MKAVKLTAAVVVLFMAPYVPITSS. N-linked (GlcNAc...) asparagine glycosylation occurs at Asn-32. The RxLR motif lies at 37–40; it reads RHLR. Asn-193 carries N-linked (GlcNAc...) asparagine glycosylation.

It belongs to the RxLR effector family.

The protein resides in the secreted. It localises to the host cytoplasm. In terms of biological role, secreted effector that does not suppress pattern-triggered immunity (PTI) in plant host. This Plasmopara halstedii (Downy mildew of sunflower) protein is Secreted RxLR effector protein RXLR-C28.